The sequence spans 127 residues: Promotilin (127 aa).

The first 25 residues, 1-25, serve as a signal peptide directing secretion; sequence MLSRKAVAALLLVHVTAMLASQTEG. The interval 41–67 is disordered; that stretch reads REQNKRLRKSLRVQQRSKAAGRLEPQE.

This sequence belongs to the motilin family. As to expression, present in the gut mucosa with the exception of the gastric corpus. Also present in medulla oblongata, nucleus of the solitary tract, hypophysis, spinal cord, hypothalamus, and cerebellum but not in the cerebral cortex.

The protein localises to the secreted. Plays an important role in the regulation of interdigestive gastrointestinal motility and indirectly causes rhythmic contraction of duodenal and colonic smooth muscle. The sequence is that of Promotilin (MLN) from Cavia porcellus (Guinea pig).